A 314-amino-acid polypeptide reads, in one-letter code: Small ribosomal subunit biogenesis GTPase RsgA (314 aa).

Positions 1–20 (MKRAPTKQPAKPAARGGERA) are disordered. Residues 85 to 246 (SDQFKSKLFA…LIDSPGFQEF (162 aa)) enclose the CP-type G domain. GTP-binding positions include 134 to 137 (NKID) and 188 to 196 (GQSGMGKST). Positions 270, 275, 277, and 283 each coordinate Zn(2+).

Belongs to the TRAFAC class YlqF/YawG GTPase family. RsgA subfamily. Monomer. Associates with 30S ribosomal subunit, binds 16S rRNA. Zn(2+) serves as cofactor.

Its subcellular location is the cytoplasm. Functionally, one of several proteins that assist in the late maturation steps of the functional core of the 30S ribosomal subunit. Helps release RbfA from mature subunits. May play a role in the assembly of ribosomal proteins into the subunit. Circularly permuted GTPase that catalyzes slow GTP hydrolysis, GTPase activity is stimulated by the 30S ribosomal subunit. This chain is Small ribosomal subunit biogenesis GTPase RsgA, found in Burkholderia pseudomallei (strain K96243).